The sequence spans 197 residues: uncharacterized protein (197 aa).

The region spanning 29–166 (DWSVHTVSLD…FTNLILEMID (138 aa)) is the PfpI endopeptidase domain. Cysteine 98 functions as the Nucleophile in the catalytic mechanism.

This sequence belongs to the peptidase C56 family.

This is an uncharacterized protein from Bacillus subtilis (strain 168).